A 315-amino-acid chain; its full sequence is ATP synthase gamma chain (315 aa).

It belongs to the ATPase gamma chain family. F-type ATPases have 2 components, CF(1) - the catalytic core - and CF(0) - the membrane proton channel. CF(1) has five subunits: alpha(3), beta(3), gamma(1), delta(1), epsilon(1). CF(0) has three main subunits: a, b and c.

It is found in the cellular thylakoid membrane. Produces ATP from ADP in the presence of a proton gradient across the membrane. The gamma chain is believed to be important in regulating ATPase activity and the flow of protons through the CF(0) complex. The chain is ATP synthase gamma chain from Trichormus variabilis (strain ATCC 29413 / PCC 7937) (Anabaena variabilis).